A 258-amino-acid polypeptide reads, in one-letter code: 5'-nucleotidase SurE (258 aa).

Aspartate 8, aspartate 9, serine 40, and asparagine 92 together coordinate a divalent metal cation.

Belongs to the SurE nucleotidase family. A divalent metal cation is required as a cofactor.

It is found in the cytoplasm. It carries out the reaction a ribonucleoside 5'-phosphate + H2O = a ribonucleoside + phosphate. Nucleotidase that shows phosphatase activity on nucleoside 5'-monophosphates. The sequence is that of 5'-nucleotidase SurE from Brucella anthropi (strain ATCC 49188 / DSM 6882 / CCUG 24695 / JCM 21032 / LMG 3331 / NBRC 15819 / NCTC 12168 / Alc 37) (Ochrobactrum anthropi).